Here is a 308-residue protein sequence, read N- to C-terminus: Cytochrome b (308 aa).

4 helical membrane-spanning segments follow: residues 1-21, 45-66, 81-101, and 146-166; these read FGSL…LLAM, WLIR…YFHI, WNIG…GYVL, and FFAL…VHLT. 2 residues coordinate heme b: His-51 and His-65. The heme b site is built by His-150 and His-164. His-169 lines the a ubiquinone pocket. The next 3 membrane-spanning stretches (helical) occupy residues 194 to 214, 256 to 276, and 288 to 308; these read TKDI…ALFS, LGGV…PLLH, and LSQI…WVGS.

This sequence belongs to the cytochrome b family. The cytochrome bc1 complex contains 11 subunits: 3 respiratory subunits (MT-CYB, CYC1 and UQCRFS1), 2 core proteins (UQCRC1 and UQCRC2) and 6 low-molecular weight proteins (UQCRH/QCR6, UQCRB/QCR7, UQCRQ/QCR8, UQCR10/QCR9, UQCR11/QCR10 and a cleavage product of UQCRFS1). This cytochrome bc1 complex then forms a dimer. It depends on heme b as a cofactor.

Its subcellular location is the mitochondrion inner membrane. Functionally, component of the ubiquinol-cytochrome c reductase complex (complex III or cytochrome b-c1 complex) that is part of the mitochondrial respiratory chain. The b-c1 complex mediates electron transfer from ubiquinol to cytochrome c. Contributes to the generation of a proton gradient across the mitochondrial membrane that is then used for ATP synthesis. This is Cytochrome b (MT-CYB) from Baeolophus inornatus (Oak titmouse).